The primary structure comprises 339 residues: Extracellular matrix protein-binding protein emp (339 aa).

An N-terminal signal peptide occupies residues 1-26; sequence MKKKLFVLTMSTLFATQLINSNHANA.

It is found in the cell surface. Functionally, adhesin that binds to the host cell extracellular matrix proteins fibronectin, fibrinogen, collagen, and vitronectin. The polypeptide is Extracellular matrix protein-binding protein emp (emp) (Staphylococcus aureus (strain bovine RF122 / ET3-1)).